We begin with the raw amino-acid sequence, 127 residues long: Fluoride-specific ion channel FluC (127 aa).

The next 4 helical transmembrane spans lie at 7-27 (LILI…MGLI), 37-57 (FGTL…MAMI), 69-89 (LFMI…SAEV), and 102-122 (LGIM…GVLI). Residues glycine 77 and threonine 80 each coordinate Na(+).

The protein belongs to the fluoride channel Fluc/FEX (TC 1.A.43) family.

The protein resides in the cell inner membrane. It catalyses the reaction fluoride(in) = fluoride(out). With respect to regulation, na(+) is not transported, but it plays an essential structural role and its presence is essential for fluoride channel function. In terms of biological role, fluoride-specific ion channel. Important for reducing fluoride concentration in the cell, thus reducing its toxicity. This Mannheimia succiniciproducens (strain KCTC 0769BP / MBEL55E) protein is Fluoride-specific ion channel FluC.